A 342-amino-acid polypeptide reads, in one-letter code: Anthranilate phosphoribosyltransferase (342 aa).

Residues glycine 83, 86-87 (GD), threonine 91, 93-96 (NIST), 111-119 (KHGNRGVSS), and serine 123 contribute to the 5-phospho-alpha-D-ribose 1-diphosphate site. Glycine 83 is a binding site for anthranilate. Serine 95 provides a ligand contact to Mg(2+). Asparagine 114 serves as a coordination point for anthranilate. Anthranilate is bound at residue arginine 169. Mg(2+) contacts are provided by aspartate 228 and glutamate 229.

The protein belongs to the anthranilate phosphoribosyltransferase family. In terms of assembly, homodimer. Requires Mg(2+) as cofactor.

The catalysed reaction is N-(5-phospho-beta-D-ribosyl)anthranilate + diphosphate = 5-phospho-alpha-D-ribose 1-diphosphate + anthranilate. It participates in amino-acid biosynthesis; L-tryptophan biosynthesis; L-tryptophan from chorismate: step 2/5. In terms of biological role, catalyzes the transfer of the phosphoribosyl group of 5-phosphorylribose-1-pyrophosphate (PRPP) to anthranilate to yield N-(5'-phosphoribosyl)-anthranilate (PRA). The chain is Anthranilate phosphoribosyltransferase from Paraburkholderia phymatum (strain DSM 17167 / CIP 108236 / LMG 21445 / STM815) (Burkholderia phymatum).